The chain runs to 95 residues: MTLLSFGFSPVFFSVMAFCIISRSKFYPQRTRNKVIVLILLTFFICFLYPLTKVYLVGSYGIFDKFYLFCFISTLIAIAINVVILTINGAKNERN.

3 helical membrane-spanning segments follow: residues 1 to 21 (MTLL…FCII), 35 to 55 (VIVL…TKVY), and 67 to 87 (YLFC…ILTI).

The protein belongs to the MceB microcin immunity protein family.

It is found in the cell inner membrane. Functionally, protect the producing cell against microcin E492. This chain is Microcin E492 immunity protein, found in Klebsiella pneumoniae.